A 258-amino-acid chain; its full sequence is Small ribosomal subunit protein uS2 (258 aa).

The tract at residues 227-258 (GEQFAPASEQKEEVKTQEVQEVEDSNDDVIDD) is disordered. Over residues 235 to 244 (EQKEEVKTQE) the composition is skewed to basic and acidic residues. The segment covering 246–258 (QEVEDSNDDVIDD) has biased composition (acidic residues).

It belongs to the universal ribosomal protein uS2 family.

The polypeptide is Small ribosomal subunit protein uS2 (Caldicellulosiruptor saccharolyticus (strain ATCC 43494 / DSM 8903 / Tp8T 6331)).